The following is a 337-amino-acid chain: Autophagy-related protein 14 (337 aa).

Positions 5-20 are cysteine repeats; that stretch reads CSVCRNHVQSMYCAHC. Positions 87–153 form a coiled coil; it reads KRNNRVRYRI…NEVVKREQEL (67 aa).

It belongs to the ATG14 family.

The protein localises to the preautophagosomal structure membrane. It localises to the vacuole membrane. In terms of biological role, required for cytoplasm to vacuole transport (Cvt) and autophagy as a part of the autophagy-specific VPS34 PI3-kinase complex I. This complex is essential to recruit the ATG8-phosphatidylinositol conjugate and the ATG12-ATG5 conjugate to the pre-autophagosomal structure. ATG14 mediates the specific binding of the VPS34 PI3-kinase complex I to the preautophagosomal structure (PAS). The protein is Autophagy-related protein 14 (ATG14) of Vanderwaltozyma polyspora (strain ATCC 22028 / DSM 70294 / BCRC 21397 / CBS 2163 / NBRC 10782 / NRRL Y-8283 / UCD 57-17) (Kluyveromyces polysporus).